The primary structure comprises 5900 residues: Midasin (5900 aa).

The interval 250–270 (GSSVKSKKGGEQQQEGEGEDE) is disordered. AAA-ATPase protomer stretches follow at residues 278–583 (TNTV…LRKQ), 673–1012 (EKIS…ALNY), 1101–1346 (PIIP…IAGY), 1411–1721 (IVWT…MDKQ), 1840–2089 (RGMQ…HVLT), and 2167–2451 (LENI…EIYM). Residues 302–309 (GVTGSGKT) and 689–696 (GETGTGKT) contribute to the ATP site. The tract at residues 796–826 (QTTTNNTKENNNNNNNNNNNNNNNNNNKKRT) is disordered. Residues 797-821 (TTTNNTKENNNNNNNNNNNNNNNNN) show a composition bias toward low complexity. ATP-binding positions include 1135–1142 (GPTSSGKT), 1438–1445 (GETGCSKT), 1852–1859 (GSPGVGKT), and 2184–2191 (GPTSTSKT). A linker region spans residues 2562 to 4965 (ESAIKSILCE…EGKGKKDVSD (2404 aa)). The segment at 4932 to 5598 (GDDGEGGEGG…SVEEKKLTRE (667 aa)) is disordered. Residues 4984–5008 (KDEDEDEEKEEKDEDEGFDMQDDFE) are compositionally biased toward acidic residues. Over residues 5009–5055 (GEMHDIKKDENKDEDKKDDPNNEKENDKEMGDLEKPEDNVVDEKLWD) the composition is skewed to basic and acidic residues. Over residues 5056-5076 (EQDVQDEEEQDEEGKGDETNS) the composition is skewed to acidic residues. The segment covering 5079–5113 (MMAKQDGKDDNDDDKKDDDKKDDKKKKKEENGKPD) has biased composition (basic and acidic residues). Composition is skewed to acidic residues over residues 5114–5130 (ENEE…EDGK) and 5139–5156 (GASD…DDVI). A compositionally biased stretch (basic and acidic residues) spans 5159–5173 (EQEKEENHGDPRGDD). Residues 5174–5199 (QMEIPEDLELEDPDEGKEDDEQQDGG) show a composition bias toward acidic residues. The span at 5213 to 5224 (DVSKEEEKKKEL) shows a compositional bias: basic and acidic residues. Composition is skewed to acidic residues over residues 5225-5255 (DGDE…EDKE) and 5273-5286 (EGDE…EEDQ). A compositionally biased stretch (basic and acidic residues) spans 5297–5313 (ETPKDSEQPLGVKDKTG). The segment covering 5339–5349 (GMTQPTPSEND) has biased composition (polar residues). Over residues 5410-5442 (SEPKEKAPKQDPNAKENENQDYEFIKDDEKLDK) the composition is skewed to basic and acidic residues. Low complexity predominate over residues 5448 to 5460 (QALAAATDTQLQD). The span at 5469–5487 (DQAEQEEDQMDIDEEDDMD) shows a compositional bias: acidic residues. Basic and acidic residues-rich tracts occupy residues 5488–5536 (VDHK…KDQQ) and 5551–5570 (QFTK…KAVL). Residues 5571-5590 (DDGDDQEMEQDGDQDDEESV) are compositionally biased toward acidic residues. A VWFA domain is found at 5696-5889 (QVLLAIDDTE…NIPSILSDTL (194 aa)).

Belongs to the midasin family. Associates with pre-60S ribosomes in the nucleoplasm.

The protein localises to the nucleus. The protein resides in the nucleolus. It localises to the nucleoplasm. Nuclear chaperone required for maturation and nuclear export of pre-60S ribosome subunits. Functions at successive maturation steps to remove ribosomal factors at critical transition points, first driving the exit of early pre-60S particles from the nucleolus and then driving late pre-60S particles from the nucleus. In Dictyostelium discoideum (Social amoeba), this protein is Midasin (mdn1).